Here is a 386-residue protein sequence, read N- to C-terminus: Caspase-12 (386 aa).

In terms of domain architecture, CARD spans Met1 to Asn91. Ser84 carries the post-translational modification Phosphoserine. Residues His218 and Cys266 contribute to the active site.

The protein belongs to the peptidase C14A family. Heterotetramer that consists of two anti-parallel arranged heterodimers, each one formed by two subunits (Potential). May interact with TRAF2.

In terms of biological role, involved in the activation cascade of caspases responsible for apoptosis execution. This Canis lupus familiaris (Dog) protein is Caspase-12.